The primary structure comprises 494 residues: Aspartyl/glutamyl-tRNA(Asn/Gln) amidotransferase subunit B (494 aa).

Belongs to the GatB/GatE family. GatB subfamily. As to quaternary structure, heterotrimer of A, B and C subunits.

The catalysed reaction is L-glutamyl-tRNA(Gln) + L-glutamine + ATP + H2O = L-glutaminyl-tRNA(Gln) + L-glutamate + ADP + phosphate + H(+). It catalyses the reaction L-aspartyl-tRNA(Asn) + L-glutamine + ATP + H2O = L-asparaginyl-tRNA(Asn) + L-glutamate + ADP + phosphate + 2 H(+). In terms of biological role, allows the formation of correctly charged Asn-tRNA(Asn) or Gln-tRNA(Gln) through the transamidation of misacylated Asp-tRNA(Asn) or Glu-tRNA(Gln) in organisms which lack either or both of asparaginyl-tRNA or glutaminyl-tRNA synthetases. The reaction takes place in the presence of glutamine and ATP through an activated phospho-Asp-tRNA(Asn) or phospho-Glu-tRNA(Gln). The polypeptide is Aspartyl/glutamyl-tRNA(Asn/Gln) amidotransferase subunit B (Synechococcus sp. (strain CC9605)).